We begin with the raw amino-acid sequence, 152 residues long: UPF0225 protein YchJ (152 aa).

This sequence belongs to the UPF0225 family.

This Salmonella typhimurium (strain LT2 / SGSC1412 / ATCC 700720) protein is UPF0225 protein YchJ (ychJ).